We begin with the raw amino-acid sequence, 1196 residues long: Major DNA-binding protein (1196 aa).

A zinc finger spans residues 499–512 (CNLCTFDTRHACVH). 2 consecutive short sequence motifs (required for filament formation) follow at residues 843–844 (FW) and 1142–1144 (FNF). A disordered region spans residues 1158-1196 (GGPGAPGPAFAGRKRAFHGDDPFGEGPPDKKGDLTLDML). Residues 1170–1196 (RKRAFHGDDPFGEGPPDKKGDLTLDML) are required for nuclear localization. Residues 1174–1196 (FHGDDPFGEGPPDKKGDLTLDML) are compositionally biased toward basic and acidic residues.

Belongs to the herpesviridae major DNA-binding protein family. Homooligomers. Forms double-helical filaments necessary for the formation of replication compartments within the host nucleus. Interacts with the origin-binding protein. Interacts with the helicase primase complex; this interaction stimulates primer synthesis activity of the helicase-primase complex. Interacts with the DNA polymerase. Interacts with the alkaline exonuclease; this interaction increases its nuclease processivity.

The protein resides in the host nucleus. Plays several crucial roles in viral infection. Participates in the opening of the viral DNA origin to initiate replication by interacting with the origin-binding protein. May disrupt loops, hairpins and other secondary structures present on ssDNA to reduce and eliminate pausing of viral DNA polymerase at specific sites during elongation. Promotes viral DNA recombination by performing strand-transfer, characterized by the ability to transfer a DNA strand from a linear duplex to a complementary single-stranded DNA circle. Can also catalyze the renaturation of complementary single strands. Additionally, reorganizes the host cell nucleus, leading to the formation of prereplicative sites and replication compartments. This process is driven by the protein which can form double-helical filaments in the absence of DNA. This is Major DNA-binding protein from Homo sapiens (Human).